Reading from the N-terminus, the 90-residue chain is Small ribosomal subunit protein uS15 (90 aa).

It belongs to the universal ribosomal protein uS15 family. Part of the 30S ribosomal subunit. Forms a bridge to the 50S subunit in the 70S ribosome, contacting the 23S rRNA.

Its function is as follows. One of the primary rRNA binding proteins, it binds directly to 16S rRNA where it helps nucleate assembly of the platform of the 30S subunit by binding and bridging several RNA helices of the 16S rRNA. Functionally, forms an intersubunit bridge (bridge B4) with the 23S rRNA of the 50S subunit in the ribosome. In Campylobacter jejuni subsp. jejuni serotype O:6 (strain 81116 / NCTC 11828), this protein is Small ribosomal subunit protein uS15.